A 120-amino-acid chain; its full sequence is NAD(P)H-quinone oxidoreductase subunit 3, chloroplastic (120 aa).

The next 3 membrane-spanning stretches (helical) occupy residues 9-29 (IFWAFLIISSLIPILAFLISG), 64-84 (MFALVFVVFDVETVFLYPWAM), and 88-108 (VLGVSVFIEALIFVLILIVGL).

This sequence belongs to the complex I subunit 3 family. As to quaternary structure, NDH is composed of at least 16 different subunits, 5 of which are encoded in the nucleus.

It localises to the plastid. Its subcellular location is the chloroplast thylakoid membrane. The catalysed reaction is a plastoquinone + NADH + (n+1) H(+)(in) = a plastoquinol + NAD(+) + n H(+)(out). The enzyme catalyses a plastoquinone + NADPH + (n+1) H(+)(in) = a plastoquinol + NADP(+) + n H(+)(out). Functionally, NDH shuttles electrons from NAD(P)H:plastoquinone, via FMN and iron-sulfur (Fe-S) centers, to quinones in the photosynthetic chain and possibly in a chloroplast respiratory chain. The immediate electron acceptor for the enzyme in this species is believed to be plastoquinone. Couples the redox reaction to proton translocation, and thus conserves the redox energy in a proton gradient. The sequence is that of NAD(P)H-quinone oxidoreductase subunit 3, chloroplastic from Lupinus luteus (European yellow lupine).